Consider the following 236-residue polypeptide: 5'-methylthioadenosine/S-adenosylhomocysteine nucleosidase (236 aa).

Residue Glu-12 is the Proton acceptor of the active site. Residues Gly-78, Ile-153, and 174 to 175 (ME) contribute to the substrate site. The active-site Proton donor is Asp-198.

It belongs to the PNP/UDP phosphorylase family. MtnN subfamily.

It carries out the reaction S-adenosyl-L-homocysteine + H2O = S-(5-deoxy-D-ribos-5-yl)-L-homocysteine + adenine. The catalysed reaction is S-methyl-5'-thioadenosine + H2O = 5-(methylsulfanyl)-D-ribose + adenine. The enzyme catalyses 5'-deoxyadenosine + H2O = 5-deoxy-D-ribose + adenine. Its pathway is amino-acid biosynthesis; L-methionine biosynthesis via salvage pathway; S-methyl-5-thio-alpha-D-ribose 1-phosphate from S-methyl-5'-thioadenosine (hydrolase route): step 1/2. Catalyzes the irreversible cleavage of the glycosidic bond in both 5'-methylthioadenosine (MTA) and S-adenosylhomocysteine (SAH/AdoHcy) to adenine and the corresponding thioribose, 5'-methylthioribose and S-ribosylhomocysteine, respectively. Also cleaves 5'-deoxyadenosine, a toxic by-product of radical S-adenosylmethionine (SAM) enzymes, into 5-deoxyribose and adenine. This Shewanella oneidensis (strain ATCC 700550 / JCM 31522 / CIP 106686 / LMG 19005 / NCIMB 14063 / MR-1) protein is 5'-methylthioadenosine/S-adenosylhomocysteine nucleosidase.